The following is a 610-amino-acid chain: Glutamine--fructose-6-phosphate aminotransferase [isomerizing] (610 aa).

The active-site Nucleophile; for GATase activity is the cysteine 2. In terms of domain architecture, Glutamine amidotransferase type-2 spans 2-221 (CGIVGAVAQR…DGDVVDLQLA (220 aa)). SIS domains lie at 286–426 (AYKV…TRGR) and 459–600 (WADR…VDKP). Lysine 605 (for Fru-6P isomerization activity) is an active-site residue.

Homodimer.

Its subcellular location is the cytoplasm. The catalysed reaction is D-fructose 6-phosphate + L-glutamine = D-glucosamine 6-phosphate + L-glutamate. Catalyzes the first step in hexosamine metabolism, converting fructose-6P into glucosamine-6P using glutamine as a nitrogen source. The sequence is that of Glutamine--fructose-6-phosphate aminotransferase [isomerizing] from Bordetella pertussis (strain Tohama I / ATCC BAA-589 / NCTC 13251).